A 526-amino-acid polypeptide reads, in one-letter code: Chaperonin GroEL 2 (526 aa).

ATP is bound by residues K50, G413, and D494.

It belongs to the chaperonin (HSP60) family. Forms a cylinder of 14 subunits composed of two heptameric rings stacked back-to-back. Interacts with the co-chaperonin GroES.

The protein localises to the cytoplasm. The catalysed reaction is ATP + H2O + a folded polypeptide = ADP + phosphate + an unfolded polypeptide.. Functionally, together with its co-chaperonin GroES, plays an essential role in assisting protein folding. The GroEL-GroES system forms a nano-cage that allows encapsulation of the non-native substrate proteins and provides a physical environment optimized to promote and accelerate protein folding. The chain is Chaperonin GroEL 2 from Chlamydia pneumoniae (Chlamydophila pneumoniae).